The following is a 664-amino-acid chain: Methionine--tRNA ligase (664 aa).

The short motif at 15-25 (YYPSGKAHIGH) is the 'HIGH' region element. A 'KMSKS' region motif is present at residues 310–314 (KMSKS). Lys313 serves as a coordination point for ATP. The tRNA-binding domain occupies 563–664 (DFDKIDLRVA…SALPNGAKVK (102 aa)).

It belongs to the class-I aminoacyl-tRNA synthetase family. MetG type 2B subfamily. As to quaternary structure, homodimer.

The protein localises to the cytoplasm. It catalyses the reaction tRNA(Met) + L-methionine + ATP = L-methionyl-tRNA(Met) + AMP + diphosphate. Functionally, is required not only for elongation of protein synthesis but also for the initiation of all mRNA translation through initiator tRNA(fMet) aminoacylation. The chain is Methionine--tRNA ligase (metG) from Listeria innocua serovar 6a (strain ATCC BAA-680 / CLIP 11262).